We begin with the raw amino-acid sequence, 149 residues long: Large ribosomal subunit protein bL9 (149 aa).

This sequence belongs to the bacterial ribosomal protein bL9 family.

Binds to the 23S rRNA. This Mycoplasma pneumoniae (strain ATCC 29342 / M129 / Subtype 1) (Mycoplasmoides pneumoniae) protein is Large ribosomal subunit protein bL9.